Reading from the N-terminus, the 578-residue chain is Arginine--tRNA ligase (578 aa).

The 'HIGH' region motif lies at 122–132 (PNVAKEMHVGH).

The protein belongs to the class-I aminoacyl-tRNA synthetase family. As to quaternary structure, monomer.

Its subcellular location is the cytoplasm. The enzyme catalyses tRNA(Arg) + L-arginine + ATP = L-arginyl-tRNA(Arg) + AMP + diphosphate. This is Arginine--tRNA ligase from Shigella sonnei (strain Ss046).